Reading from the N-terminus, the 246-residue chain is Orotidine 5'-phosphate decarboxylase (246 aa).

Substrate is bound by residues aspartate 22, lysine 44, 71 to 80 (DLKFHDIPNT), threonine 131, arginine 192, glutamine 201, glycine 221, and arginine 222. Lysine 73 acts as the Proton donor in catalysis.

This sequence belongs to the OMP decarboxylase family. Type 1 subfamily. Homodimer.

It catalyses the reaction orotidine 5'-phosphate + H(+) = UMP + CO2. It participates in pyrimidine metabolism; UMP biosynthesis via de novo pathway; UMP from orotate: step 2/2. In terms of biological role, catalyzes the decarboxylation of orotidine 5'-monophosphate (OMP) to uridine 5'-monophosphate (UMP). This is Orotidine 5'-phosphate decarboxylase from Yersinia enterocolitica serotype O:8 / biotype 1B (strain NCTC 13174 / 8081).